The chain runs to 156 residues: MPKMNVESFNLDHTIVVAPFVRLAGKMEGANGDVIHKYDIRFKQPNKEHMDMPGLHSLEHLMAENIRNHSDKVVDISPMGCQTGFYVSFINHDDYEDVLNIIEATIKDVLNATEVPACNEVQCGWAASHSLEGAKEIAQTFLDKKAEWHDIYGEAQ.

Fe cation-binding residues include His56, His60, and Cys123.

This sequence belongs to the LuxS family. As to quaternary structure, homodimer. It depends on Fe cation as a cofactor.

It carries out the reaction S-(5-deoxy-D-ribos-5-yl)-L-homocysteine = (S)-4,5-dihydroxypentane-2,3-dione + L-homocysteine. Its function is as follows. Involved in the synthesis of autoinducer 2 (AI-2) which is secreted by bacteria and is used to communicate both the cell density and the metabolic potential of the environment. The regulation of gene expression in response to changes in cell density is called quorum sensing. Catalyzes the transformation of S-ribosylhomocysteine (RHC) to homocysteine (HC) and 4,5-dihydroxy-2,3-pentadione (DPD). This chain is S-ribosylhomocysteine lyase, found in Staphylococcus saprophyticus subsp. saprophyticus (strain ATCC 15305 / DSM 20229 / NCIMB 8711 / NCTC 7292 / S-41).